The primary structure comprises 694 residues: Ubiquitin-like modifier-activating enzyme ATG7 (694 aa).

The GXGXXG motif signature appears at 370-375 (GAGTLG). The active-site Glycyl thioester intermediate is cysteine 550. Positions 650–689 (ALQEKEYVAELSGLAEVQRRAEEMAAHVDWEEDDDLVDDG) are homodimerization.

This sequence belongs to the ATG7 family. Homodimer. Interacts with ATG8 through a thioester bond between Cys-550 and the C-terminal 'Gly-116' of ATG8 and with ATG12 through a thioester bond between Cys-550 and the C-terminal 'Gly-160' of ATG12. Also interacts with ATG3.

The protein resides in the cytoplasm. It localises to the preautophagosomal structure. Functionally, E1-like activating enzyme involved in the 2 ubiquitin-like systems required for cytoplasm to vacuole transport (Cvt) and autophagy. Activates ATG12 for its conjugation with ATG5 and ATG8 for its conjugation with phosphatidylethanolamine. Both systems are needed for the ATG8 association to Cvt vesicles and autophagosomes membranes. Autophagy is essential for maintenance of amino acid levels and protein synthesis under nitrogen starvation. Required for selective autophagic degradation of the nucleus (nucleophagy) as well as for mitophagy which contributes to regulate mitochondrial quantity and quality by eliminating the mitochondria to a basal level to fulfill cellular energy requirements and preventing excess ROS production. Autophagy is required for proper vegetative growth, asexual/sexual reproduction, and full virulence. Autophagy is particularly involved in the biosynthesis of deoxynivalenol (DON), an important virulence determinant. The polypeptide is Ubiquitin-like modifier-activating enzyme ATG7 (Gibberella zeae (strain ATCC MYA-4620 / CBS 123657 / FGSC 9075 / NRRL 31084 / PH-1) (Wheat head blight fungus)).